The chain runs to 380 residues: Cytochrome b (380 aa).

The next 4 membrane-spanning stretches (helical) occupy residues 34 to 54 (FGSL…LLAA), 78 to 99 (WLIR…YLHI), 114 to 134 (WNIG…GYVL), and 179 to 199 (FFAL…VHLT). The heme b site is built by H84 and H98. H183 and H197 together coordinate heme b. H202 serves as a coordination point for a ubiquinone. Helical transmembrane passes span 227-247 (IKDI…ALFS), 289-309 (LGGV…PLLH), 321-341 (LSQI…WVGS), and 348-368 (FIII…VLFP).

The protein belongs to the cytochrome b family. The cytochrome bc1 complex contains 11 subunits: 3 respiratory subunits (MT-CYB, CYC1 and UQCRFS1), 2 core proteins (UQCRC1 and UQCRC2) and 6 low-molecular weight proteins (UQCRH/QCR6, UQCRB/QCR7, UQCRQ/QCR8, UQCR10/QCR9, UQCR11/QCR10 and a cleavage product of UQCRFS1). This cytochrome bc1 complex then forms a dimer. Heme b is required as a cofactor.

It is found in the mitochondrion inner membrane. Functionally, component of the ubiquinol-cytochrome c reductase complex (complex III or cytochrome b-c1 complex) that is part of the mitochondrial respiratory chain. The b-c1 complex mediates electron transfer from ubiquinol to cytochrome c. Contributes to the generation of a proton gradient across the mitochondrial membrane that is then used for ATP synthesis. The sequence is that of Cytochrome b (MT-CYB) from Paradisaea rubra (Red bird of paradise).